Reading from the N-terminus, the 568-residue chain is 2-succinyl-5-enolpyruvyl-6-hydroxy-3-cyclohexene-1-carboxylate synthase (568 aa).

It belongs to the TPP enzyme family. MenD subfamily. Homodimer. Requires Mg(2+) as cofactor. Mn(2+) serves as cofactor. It depends on thiamine diphosphate as a cofactor.

It carries out the reaction isochorismate + 2-oxoglutarate + H(+) = 5-enolpyruvoyl-6-hydroxy-2-succinyl-cyclohex-3-ene-1-carboxylate + CO2. The protein operates within quinol/quinone metabolism; 1,4-dihydroxy-2-naphthoate biosynthesis; 1,4-dihydroxy-2-naphthoate from chorismate: step 2/7. It functions in the pathway quinol/quinone metabolism; menaquinone biosynthesis. In terms of biological role, catalyzes the thiamine diphosphate-dependent decarboxylation of 2-oxoglutarate and the subsequent addition of the resulting succinic semialdehyde-thiamine pyrophosphate anion to isochorismate to yield 2-succinyl-5-enolpyruvyl-6-hydroxy-3-cyclohexene-1-carboxylate (SEPHCHC). This Pasteurella multocida (strain Pm70) protein is 2-succinyl-5-enolpyruvyl-6-hydroxy-3-cyclohexene-1-carboxylate synthase.